A 353-amino-acid polypeptide reads, in one-letter code: Protein MGF 360-13L (353 aa).

It belongs to the asfivirus MGF 360 family.

Functionally, plays a role in virus cell tropism, and may be required for efficient virus replication in macrophages. The polypeptide is Protein MGF 360-13L (African swine fever virus (isolate Pig/Kenya/KEN-50/1950) (ASFV)).